Here is a 62-residue protein sequence, read N- to C-terminus: Probable tautomerase SH1546 (62 aa).

The active-site Proton acceptor; via imino nitrogen is the Pro2.

Belongs to the 4-oxalocrotonate tautomerase family.

The polypeptide is Probable tautomerase SH1546 (Staphylococcus haemolyticus (strain JCSC1435)).